The primary structure comprises 458 residues: ATP synthase subunit beta (458 aa).

148–155 is a binding site for ATP; it reads GGAGVGKT.

Belongs to the ATPase alpha/beta chains family. As to quaternary structure, F-type ATPases have 2 components, CF(1) - the catalytic core - and CF(0) - the membrane proton channel. CF(1) has five subunits: alpha(3), beta(3), gamma(1), delta(1), epsilon(1). CF(0) has three main subunits: a(1), b(2) and c(9-12). The alpha and beta chains form an alternating ring which encloses part of the gamma chain. CF(1) is attached to CF(0) by a central stalk formed by the gamma and epsilon chains, while a peripheral stalk is formed by the delta and b chains.

It localises to the cell inner membrane. The catalysed reaction is ATP + H2O + 4 H(+)(in) = ADP + phosphate + 5 H(+)(out). In terms of biological role, produces ATP from ADP in the presence of a proton gradient across the membrane. The catalytic sites are hosted primarily by the beta subunits. This Francisella tularensis subsp. tularensis (strain FSC 198) protein is ATP synthase subunit beta.